We begin with the raw amino-acid sequence, 202 residues long: ATP-dependent Clp protease proteolytic subunit (202 aa).

The active-site Nucleophile is the serine 106. The active site involves histidine 131.

This sequence belongs to the peptidase S14 family. Fourteen ClpP subunits assemble into 2 heptameric rings which stack back to back to give a disk-like structure with a central cavity, resembling the structure of eukaryotic proteasomes.

Its subcellular location is the cytoplasm. The enzyme catalyses Hydrolysis of proteins to small peptides in the presence of ATP and magnesium. alpha-casein is the usual test substrate. In the absence of ATP, only oligopeptides shorter than five residues are hydrolyzed (such as succinyl-Leu-Tyr-|-NHMec, and Leu-Tyr-Leu-|-Tyr-Trp, in which cleavage of the -Tyr-|-Leu- and -Tyr-|-Trp bonds also occurs).. In terms of biological role, cleaves peptides in various proteins in a process that requires ATP hydrolysis. Has a chymotrypsin-like activity. Plays a major role in the degradation of misfolded proteins. This Paracidovorax citrulli (strain AAC00-1) (Acidovorax citrulli) protein is ATP-dependent Clp protease proteolytic subunit.